A 270-amino-acid chain; its full sequence is 3-methyl-2-oxobutanoate hydroxymethyltransferase (270 aa).

Asp-43 and Asp-82 together coordinate Mg(2+). 3-methyl-2-oxobutanoate is bound by residues 43 to 44 (DS), Asp-82, and Lys-110. Glu-112 is a Mg(2+) binding site. Glu-179 functions as the Proton acceptor in the catalytic mechanism.

The protein belongs to the PanB family. In terms of assembly, homodecamer; pentamer of dimers. The cofactor is Mg(2+).

The protein resides in the cytoplasm. It carries out the reaction 3-methyl-2-oxobutanoate + (6R)-5,10-methylene-5,6,7,8-tetrahydrofolate + H2O = 2-dehydropantoate + (6S)-5,6,7,8-tetrahydrofolate. It participates in cofactor biosynthesis; (R)-pantothenate biosynthesis; (R)-pantoate from 3-methyl-2-oxobutanoate: step 1/2. Functionally, catalyzes the reversible reaction in which hydroxymethyl group from 5,10-methylenetetrahydrofolate is transferred onto alpha-ketoisovalerate to form ketopantoate. The protein is 3-methyl-2-oxobutanoate hydroxymethyltransferase of Psychrobacter sp. (strain PRwf-1).